The primary structure comprises 166 residues: Large ribosomal subunit protein uL10 (166 aa).

It belongs to the universal ribosomal protein uL10 family. As to quaternary structure, part of the ribosomal stalk of the 50S ribosomal subunit. The N-terminus interacts with L11 and the large rRNA to form the base of the stalk. The C-terminus forms an elongated spine to which L12 dimers bind in a sequential fashion forming a multimeric L10(L12)X complex.

In terms of biological role, forms part of the ribosomal stalk, playing a central role in the interaction of the ribosome with GTP-bound translation factors. In Marinomonas sp. (strain MWYL1), this protein is Large ribosomal subunit protein uL10.